The primary structure comprises 122 residues: Large ribosomal subunit protein uL14 (122 aa).

This sequence belongs to the universal ribosomal protein uL14 family. As to quaternary structure, part of the 50S ribosomal subunit. Forms a cluster with proteins L3 and L19. In the 70S ribosome, L14 and L19 interact and together make contacts with the 16S rRNA in bridges B5 and B8.

Its function is as follows. Binds to 23S rRNA. Forms part of two intersubunit bridges in the 70S ribosome. In Clostridium botulinum (strain Alaska E43 / Type E3), this protein is Large ribosomal subunit protein uL14.